A 213-amino-acid polypeptide reads, in one-letter code: Thiopurine S-methyltransferase (213 aa).

S-adenosyl-L-methionine-binding residues include W10, L46, E67, and R124.

It belongs to the class I-like SAM-binding methyltransferase superfamily. TPMT family.

The protein localises to the cytoplasm. It catalyses the reaction S-adenosyl-L-methionine + a thiopurine = S-adenosyl-L-homocysteine + a thiopurine S-methylether.. This chain is Thiopurine S-methyltransferase, found in Xanthobacter autotrophicus (strain ATCC BAA-1158 / Py2).